A 21-amino-acid chain; its full sequence is Testis ecdysiotropin peptide 1 (21 aa).

Residues 1–21 (ISDFDEYEPLNDADNNEVLDF) form a disordered region.

Functionally, start or boost ecdysteroid synthesis in testis of larvae and pupae. The polypeptide is Testis ecdysiotropin peptide 1 (Lymantria dispar (Gypsy moth)).